Consider the following 85-residue polypeptide: UPF0386 protein Meso_1721 (85 aa).

It belongs to the UPF0386 family.

This is UPF0386 protein Meso_1721 from Chelativorans sp. (strain BNC1).